Reading from the N-terminus, the 104-residue chain is GVVDSNDLPLNVSELVSNASDALDKLSSSPCVLVSGKFWDNFGKTZTVEVEDDSAEAKTLSKFLNAALTDKTEEVVRNWKLMNAAELLSEINRLSSSEWQAALR.

N11 and N18 each carry an N-linked (GlcNAc...) asparagine glycan. N18 serves as a coordination point for ATP.

Belongs to the heat shock protein 90 family. Homodimer.

The protein resides in the cytoplasm. Its function is as follows. Putative molecular chaperone that may promote the maturation, structural maintenance and proper regulation of specific target proteins. The protein is Putative heat shock protein PS1 of Pinus strobus (Eastern white pine).